Consider the following 573-residue polypeptide: Chromosomal replication initiator protein DnaA (573 aa).

Residues 1 to 85 form a domain I, interacts with DnaA modulators region; it reads MSQNSSSLLE…TKVLSMRMGR (85 aa). Residues 85–231 are domain II; it reads RSFSLAVSVE…TPAHNPNREV (147 aa). The segment at 91–232 is disordered; the sequence is VSVEPSRDGE…PAHNPNREVS (142 aa). Over residues 116–169 the composition is skewed to low complexity; it reads PYPGQGPQSPQGQQGQQGQHPVQQEVRAHAPAPHQQGQHQAAQHQPPANQAPGQ. Over residues 178 to 191 the composition is skewed to polar residues; that stretch reads QASQSAGAWEQTHS. Residues 202–213 show a composition bias toward pro residues; the sequence is SPAPVEPPPQPA. The interval 232–448 is domain III, AAA+ region; sequence SLNPKYTFEN…GALIRVSAYS (217 aa). ATP-binding residues include G276, G278, K279, and T280. The segment at 449–573 is domain IV, binds dsDNA; that stretch reads SLINQPIDKE…TQLIKSRGRN (125 aa).

This sequence belongs to the DnaA family. Oligomerizes as a right-handed, spiral filament on DNA at oriC.

It localises to the cytoplasm. Plays an essential role in the initiation and regulation of chromosomal replication. ATP-DnaA binds to the origin of replication (oriC) to initiate formation of the DNA replication initiation complex once per cell cycle. Binds the DnaA box (a 9 base pair repeat at the origin) and separates the double-stranded (ds)DNA. Forms a right-handed helical filament on oriC DNA; dsDNA binds to the exterior of the filament while single-stranded (ss)DNA is stabiized in the filament's interior. The ATP-DnaA-oriC complex binds and stabilizes one strand of the AT-rich DNA unwinding element (DUE), permitting loading of DNA polymerase. After initiation quickly degrades to an ADP-DnaA complex that is not apt for DNA replication. Binds acidic phospholipids. The polypeptide is Chromosomal replication initiator protein DnaA (Corynebacterium efficiens (strain DSM 44549 / YS-314 / AJ 12310 / JCM 11189 / NBRC 100395)).